The chain runs to 593 residues: Mono(ADP-ribosyl)transferase SpvB (593 aa).

A disordered region spans residues 361-384; sequence PVNNMMPPPPPPPPPMMGGNSSRP. Residues 366 to 376 are compositionally biased toward pro residues; sequence MPPPPPPPPPM. A TR mART core domain is found at 375–578; it reads PMMGGNSSRP…LRLSDDATAD (204 aa). Catalysis depends on residues arginine 473, serine 503, and glutamate 540.

The protein belongs to the SpvB family.

Its subcellular location is the secreted. The catalysed reaction is L-arginyl-[protein] + NAD(+) = N(omega)-(ADP-D-ribosyl)-L-arginyl-[protein] + nicotinamide + H(+). Its function is as follows. Mono-ADP-ribosylates muscle and non-muscle actin. ADP-ribosylates Chinese hamster ovary and HeLa cell actin as well as rabbit muscle, porcine heart actin and non-muscle beta- and gamma-actin. ADP-ribosylation of actin prevents the polymerization of G actin to F actin, causing actin filament depolymerization, destruction of the cytoskeleton and cytotoxicity; this requires only the C-terminal 120 residues. Does not possess NAD(+)-glycohydrolase activity, unlike most mART enzymes. The protein is Mono(ADP-ribosyl)transferase SpvB (spvB) of Salmonella dublin.